The primary structure comprises 841 residues: Outer membrane usher protein MyfC (841 aa).

A signal peptide spans 1–26 (MFFSLKNSVAKLIAFWAICLVLPVWA). A disulfide bond links C817 and C840.

This sequence belongs to the fimbrial export usher family.

Its subcellular location is the cell outer membrane. Functionally, involved in the export and assembly of the MyfA fimbrial subunit. This Yersinia enterocolitica protein is Outer membrane usher protein MyfC (myfC).